Here is a 263-residue protein sequence, read N- to C-terminus: MDIIPPRLKEPAYRIYEMRLRHELVRSKAQLPRHIAVLCDGNRRWARDAGYDDVSIGYRKGAAKIAEMLRWCQAAGIEMATIYLLSTENLQRDPDELTALIEIITDVVEEICAPYNKWSVRTVGDLELLGDEPARRLREAVESTTTKGANFHVNVAVAYGGRQEIVDAVRSLLSKELANGATAEQLIEAVTVDGISENLYTSGQPDPDLVIRTSGEQRLSGFLLWQSAYSEMWFTEAYWPAFRRVDFLRALRDYTARHRRFGK.

Residue aspartate 40 is part of the active site. A Mg(2+)-binding site is contributed by aspartate 40. Substrate is bound by residues 41 to 44, tryptophan 45, and 86 to 88; these read GNRR and STE. Asparagine 89 (proton acceptor) is an active-site residue. Residues arginine 92, arginine 212, and 218–220 contribute to the substrate site; that span reads RLS. Glutamate 231 lines the Mg(2+) pocket.

It belongs to the UPP synthase family. Z-FPP synthase subfamily. As to quaternary structure, homodimer. Requires Mg(2+) as cofactor.

The protein resides in the cell membrane. The catalysed reaction is isopentenyl diphosphate + (2E)-geranyl diphosphate = (2Z,6E)-farnesyl diphosphate + diphosphate. Its function is as follows. Catalyzes the condensation of only one isopentenyl pyrophosphate (IPP) unit in the cis configuration to E-geranyl diphosphate (E-GPP) generating the 15 carbon product (2Z,6E)-farnesyl diphosphate (Z-FPP or EZ-FPP). Z-FPP is the precursor of decaprenyl diphosphate, which has a central role in the biosynthesis of the mycobacterial cell wall. The sequence is that of (2Z,6E)-farnesyl diphosphate synthase (uppS) from Mycolicibacterium smegmatis (strain ATCC 700084 / mc(2)155) (Mycobacterium smegmatis).